The chain runs to 438 residues: MDQQPIQVIGGGLAGTEAAWQIAQAGVPVILHEMRPKRFSPAHHTEHLAELVCSNSFGAMASDRAAGLLHEELRQLGSVVIAKADEHAVPAGGALAVDRGQFGQDLTQTLASHPLVEFRRSEVPAIPEGIVVLATGPLTSPDLAADLHRFTGMEYMSFFDAASPIIVGDSINRDIAFMASRYDKGEAAYLNCPMNKEQYLRFREELCKAEQTELKDFERETAKFFEACLPIEELAQRGEDTMRYGPVKPVGLSDSRTGERPYAVVQLRQEDKAGQLWNMVGFQTNLRWGEQKRVFQMIPGLEKAEFVRLGVMHRNTFINAPQLMLPTLQFKQRPTLLAAGQLIGTEGYTAAAAGGWLAGTNAARLALGKEPLALPPTTMLGALLEFISSASPKHFQPMPPNFGILPDLGMKIKSKPERYGRYRDRSLADLSSWKHNLN.

10 to 15 contacts FAD; the sequence is GGGLAG.

The protein belongs to the MnmG family. TrmFO subfamily. The cofactor is FAD.

It localises to the cytoplasm. It carries out the reaction uridine(54) in tRNA + (6R)-5,10-methylene-5,6,7,8-tetrahydrofolate + NADH + H(+) = 5-methyluridine(54) in tRNA + (6S)-5,6,7,8-tetrahydrofolate + NAD(+). The enzyme catalyses uridine(54) in tRNA + (6R)-5,10-methylene-5,6,7,8-tetrahydrofolate + NADPH + H(+) = 5-methyluridine(54) in tRNA + (6S)-5,6,7,8-tetrahydrofolate + NADP(+). Catalyzes the folate-dependent formation of 5-methyl-uridine at position 54 (M-5-U54) in all tRNAs. This is Methylenetetrahydrofolate--tRNA-(uracil-5-)-methyltransferase TrmFO from Trichormus variabilis (strain ATCC 29413 / PCC 7937) (Anabaena variabilis).